We begin with the raw amino-acid sequence, 497 residues long: Glycerol kinase (497 aa).

Thr13 is a binding site for ADP. 3 residues coordinate ATP: Thr13, Thr14, and Ser15. Thr13 provides a ligand contact to sn-glycerol 3-phosphate. Arg17 is an ADP binding site. Arg83, Glu84, and Tyr135 together coordinate sn-glycerol 3-phosphate. Glycerol contacts are provided by Arg83, Glu84, and Tyr135. His231 carries the phosphohistidine; by HPr modification. Asp245 serves as a coordination point for sn-glycerol 3-phosphate. Glycerol contacts are provided by Asp245 and Gln246. ADP is bound by residues Thr267 and Gly310. ATP-binding residues include Thr267, Gly310, Gln314, and Gly411. ADP is bound by residues Gly411 and Asn415.

It belongs to the FGGY kinase family. Homotetramer and homodimer (in equilibrium). Post-translationally, the phosphoenolpyruvate-dependent sugar phosphotransferase system (PTS), including enzyme I, and histidine-containing protein (HPr) are required for the phosphorylation, which leads to the activation of the enzyme.

The enzyme catalyses glycerol + ATP = sn-glycerol 3-phosphate + ADP + H(+). It participates in polyol metabolism; glycerol degradation via glycerol kinase pathway; sn-glycerol 3-phosphate from glycerol: step 1/1. Its activity is regulated as follows. Activated by phosphorylation and inhibited by fructose 1,6-bisphosphate (FBP). Its function is as follows. Key enzyme in the regulation of glycerol uptake and metabolism. Catalyzes the phosphorylation of glycerol to yield sn-glycerol 3-phosphate. In Listeria monocytogenes serotype 4a (strain HCC23), this protein is Glycerol kinase.